A 579-amino-acid polypeptide reads, in one-letter code: Probable zinc metalloprotease EGY1, chloroplastic (579 aa).

Disordered regions lie at residues 1-42 (MAAA…PASA) and 78-146 (GGGG…NEPP). A chloroplast-targeting transit peptide spans 1–44 (MAAAAAALASSPMVHLTASRLRLPRPARSPAAATPSPSPASAAC). A compositionally biased stretch (low complexity) spans 16-42 (LTASRLRLPRPARSPAAATPSPSPASA). Residues 78–92 (GGGGGGGGGGGGTGG) show a composition bias toward gly residues. Low complexity-rich tracts occupy residues 104–115 (AAAAEAKVGGAV) and 125–137 (SGSF…SSSG). The next 8 helical transmembrane spans lie at 272 to 292 (YVIS…LGIA), 321 to 341 (LLPF…IQLF), 357 to 377 (LSIP…ITQF), 392 to 412 (MAGP…GLLL), 419 to 439 (ASDL…LGLV), 452 to 472 (ATVA…TTAF), 505 to 525 (LLGL…YVLI), and 547 to 567 (AALI…WDEL).

This sequence belongs to the peptidase M50B family.

The protein localises to the plastid. Its subcellular location is the chloroplast membrane. Its function is as follows. Probable membrane-associated metalloprotease that may be involved in chloroplast development. The protein is Probable zinc metalloprotease EGY1, chloroplastic (EGY1) of Oryza sativa subsp. japonica (Rice).